A 236-amino-acid chain; its full sequence is uncharacterized protein (236 aa).

Positions 4-225 (LLEASIEQAG…TGLEGQSLLD (222 aa)) constitute an ABC transporter domain. 38–45 (GANGAGKS) is a binding site for ATP.

The protein belongs to the ABC transporter superfamily.

This is an uncharacterized protein from Bacillus subtilis (strain 168).